A 142-amino-acid chain; its full sequence is Hemoglobin subunit alpha-A (142 aa).

The region spanning 2-142 (VLSAADKTNV…VGTVLTAKYR (141 aa)) is the Globin domain. Histidine 59 serves as a coordination point for O2. Histidine 88 serves as a coordination point for heme b.

It belongs to the globin family. Heterotetramer of two alpha chains and two beta chains. Red blood cells.

Involved in oxygen transport from the lung to the various peripheral tissues. In Anser indicus (Bar-headed goose), this protein is Hemoglobin subunit alpha-A (HBAA).